Here is a 129-residue protein sequence, read N- to C-terminus: Small ribosomal subunit protein uS11 (129 aa).

The protein belongs to the universal ribosomal protein uS11 family. Part of the 30S ribosomal subunit. Interacts with proteins S7 and S18. Binds to IF-3.

Functionally, located on the platform of the 30S subunit, it bridges several disparate RNA helices of the 16S rRNA. Forms part of the Shine-Dalgarno cleft in the 70S ribosome. In Lacticaseibacillus casei (strain BL23) (Lactobacillus casei), this protein is Small ribosomal subunit protein uS11.